Here is a 414-residue protein sequence, read N- to C-terminus: uncharacterized protein (414 aa).

The signal sequence occupies residues 1–18 (MLKRLMLASAILPVVSFA).

This is an uncharacterized protein from Aquifex aeolicus (strain VF5).